The primary structure comprises 558 residues: MYENNKTLYLPYAGPTLLENALLNKGSAFSPEERQNFSLMGLLPAAIESITEQEERAYSQYQTFNDDMDKHIYLRNIQDTNETLYYRLIDNHIEEMMPIIYTPTVGAACEQFSNIYRRGRGLFLGYPDKGNIVDILNNAARQDVKIIVITDGERILGLGDQGIGGMGIPIGKLALYTACGGINPANTLPIVLDVGTNNTQLLSDPMYMGWRHPRITGQEYDDFVEEFIQAVKSRWPNALIQFEDFAQKNAMPLLNRYKDKVCCFNDDIQGTAAVTVGSLLAACKAAGSELSEQRITFVGAGSAGCGIAEAIVAQMIAEGLSDSAARARIFMVDRWGLLTDNMQNLLDFQQKLAQKSATVSQWNETGNISLLDVVSNGKPTVLIGVPGLFSQEVIMEMHAHCKRPIVLPLSNPTSRVEATPSDIIRWTEGDALIATGSPFDPVIFNEKTYPIAQCNNSYIFPGIGLGVLASGATRVTDEMLMESSRVLAECSPLAQNGNGALLPPLKDIHQVSHCIALAVAKKAVEQNKAPQRTEKQLLEKIESYFWKPEYLKYKRTAL.

Catalysis depends on tyrosine 101, which acts as the Proton donor. Arginine 154 provides a ligand contact to NAD(+). The active-site Proton acceptor is lysine 172. Residues glutamate 243, aspartate 244, and aspartate 267 each coordinate a divalent metal cation. The NAD(+) site is built by aspartate 267 and asparagine 411.

The protein belongs to the malic enzymes family. As to quaternary structure, homotetramer. It depends on Mg(2+) as a cofactor. The cofactor is Mn(2+).

It carries out the reaction (S)-malate + NAD(+) = pyruvate + CO2 + NADH. The catalysed reaction is oxaloacetate + H(+) = pyruvate + CO2. The polypeptide is NAD-dependent malic enzyme 2 (Photobacterium profundum (strain SS9)).